Reading from the N-terminus, the 542-residue chain is Chaperonin GroEL 1 (542 aa).

ATP is bound by residues 29-32 (TLGP), 86-90 (DGTTT), glycine 413, 477-479 (NAA), and aspartate 493.

It belongs to the chaperonin (HSP60) family. In terms of assembly, forms a cylinder of 14 subunits composed of two heptameric rings stacked back-to-back. Interacts with the co-chaperonin GroES.

The protein localises to the cytoplasm. The enzyme catalyses ATP + H2O + a folded polypeptide = ADP + phosphate + an unfolded polypeptide.. Together with its co-chaperonin GroES, plays an essential role in assisting protein folding. The GroEL-GroES system forms a nano-cage that allows encapsulation of the non-native substrate proteins and provides a physical environment optimized to promote and accelerate protein folding. The protein is Chaperonin GroEL 1 of Kineococcus radiotolerans (strain ATCC BAA-149 / DSM 14245 / SRS30216).